The sequence spans 641 residues: Anthrax toxin receptor-like (641 aa).

The N-terminal stretch at methionine 1–glycine 27 is a signal peptide. Over glycine 28 to threonine 363 the chain is Extracellular. Positions aspartate 76–leucine 247 constitute a VWFA domain. Serine 84, serine 86, and threonine 150 together coordinate a divalent metal cation. The chain crosses the membrane as a helical span at residues tryptophan 364–leucine 384. Residues cysteine 385–phenylalanine 641 lie on the Cytoplasmic side of the membrane. The segment at leucine 391 to alanine 455 is disordered. Residues proline 407–glycine 436 show a composition bias toward pro residues.

This sequence belongs to the ATR family.

Its subcellular location is the membrane. This Mus musculus (Mouse) protein is Anthrax toxin receptor-like (Antxrl).